The sequence spans 80 residues: Exodeoxyribonuclease 7 small subunit (80 aa).

It belongs to the XseB family. As to quaternary structure, heterooligomer composed of large and small subunits.

The protein localises to the cytoplasm. It carries out the reaction Exonucleolytic cleavage in either 5'- to 3'- or 3'- to 5'-direction to yield nucleoside 5'-phosphates.. Functionally, bidirectionally degrades single-stranded DNA into large acid-insoluble oligonucleotides, which are then degraded further into small acid-soluble oligonucleotides. In Pseudomonas aeruginosa (strain LESB58), this protein is Exodeoxyribonuclease 7 small subunit.